A 172-amino-acid polypeptide reads, in one-letter code: Transmembrane protein 91 (172 aa).

Residues 1 to 97 (MDNSSIQELQ…SPLLPHDHLG (97 aa)) are Extracellular-facing. The tract at residues 60–86 (GLGEPETPDFEDTLSSDSDSDDDGGDR) is disordered. A compositionally biased stretch (acidic residues) spans 65-83 (ETPDFEDTLSSDSDSDDDG). The helical transmembrane segment at 98–118 (LAVFSVLCCFWPVGIAAFCLA) threads the bilayer. Topologically, residues 119–139 (HKTNKAWAKGDVQGAGAASRR) are cytoplasmic. The helical transmembrane segment at 140–160 (AFLLGVLAVGLGLCTYAAALV) threads the bilayer. At 161–172 (TLAAYLASRDPP) the chain is on the extracellular side.

The protein belongs to the CD225/Dispanin family.

Its subcellular location is the membrane. The polypeptide is Transmembrane protein 91 (Tmem91) (Mus musculus (Mouse)).